The chain runs to 182 residues: MTRPETIIPEKPTSPYPIHTTAPIISGFGRGSSELGIPTANIPINAQLNSLPTGIYYGWCKIHPVSDQNDETRTRPDGQLILFNHGNKLQANELVVHPMVMSIGWNPFYQNKEKAAEIHIMSKFERDFYGAELEFIVLGYVRPELDYTTKEALIEDILTDIRISRDILENKEEYTKYKKELE.

The Mg(2+) site is built by Thr-39 and Asn-41. Glu-117 serves as the catalytic Nucleophile.

The protein belongs to the flavokinase family. Zn(2+) serves as cofactor. It depends on Mg(2+) as a cofactor.

It carries out the reaction riboflavin + ATP = FMN + ADP + H(+). It participates in cofactor biosynthesis; FMN biosynthesis; FMN from riboflavin (ATP route): step 1/1. In terms of biological role, catalyzes the phosphorylation of riboflavin (vitamin B2) to form flavin mononucleotide (FMN) coenzyme. This chain is Riboflavin kinase (FMN1), found in Lodderomyces elongisporus (strain ATCC 11503 / CBS 2605 / JCM 1781 / NBRC 1676 / NRRL YB-4239) (Yeast).